Consider the following 554-residue polypeptide: Glucose-6-phosphate isomerase (554 aa).

The Proton donor role is filled by glutamate 359. Residues histidine 390 and lysine 518 contribute to the active site.

Belongs to the GPI family.

It localises to the cytoplasm. It carries out the reaction alpha-D-glucose 6-phosphate = beta-D-fructose 6-phosphate. The protein operates within carbohydrate biosynthesis; gluconeogenesis. Its pathway is carbohydrate degradation; glycolysis; D-glyceraldehyde 3-phosphate and glycerone phosphate from D-glucose: step 2/4. In terms of biological role, catalyzes the reversible isomerization of glucose-6-phosphate to fructose-6-phosphate. The chain is Glucose-6-phosphate isomerase from Pseudomonas entomophila (strain L48).